We begin with the raw amino-acid sequence, 450 residues long: Tubulin alpha-4 chain (450 aa).

Q11 is a binding site for GTP. K40 is modified (N6-acetyllysine). E71, G144, T145, T179, N206, and N228 together coordinate GTP. Mg(2+) is bound at residue E71. Residue E254 is part of the active site. Residues 431–450 (DYEEVGAESGEGDEGDEEEY) form a disordered region.

The protein belongs to the tubulin family. In terms of assembly, dimer of alpha and beta chains. A typical microtubule is a hollow water-filled tube with an outer diameter of 25 nm and an inner diameter of 15 nM. Alpha-beta heterodimers associate head-to-tail to form protofilaments running lengthwise along the microtubule wall with the beta-tubulin subunit facing the microtubule plus end conferring a structural polarity. Microtubules usually have 13 protofilaments but different protofilament numbers can be found in some organisms and specialized cells. The cofactor is Mg(2+). In terms of processing, undergoes a tyrosination/detyrosination cycle, the cyclic removal and re-addition of a C-terminal tyrosine residue by the enzymes tubulin tyrosine carboxypeptidase (TTCP) and tubulin tyrosine ligase (TTL), respectively. Acetylation of alpha chains at Lys-40 stabilizes microtubules and affects affinity and processivity of microtubule motors. This modification has a role in multiple cellular functions, ranging from cell motility, cell cycle progression or cell differentiation to intracellular trafficking and signaling.

It is found in the cytoplasm. The protein resides in the cytoskeleton. It carries out the reaction GTP + H2O = GDP + phosphate + H(+). Functionally, tubulin is the major constituent of microtubules, a cylinder consisting of laterally associated linear protofilaments composed of alpha- and beta-tubulin heterodimers. Microtubules grow by the addition of GTP-tubulin dimers to the microtubule end, where a stabilizing cap forms. Below the cap, tubulin dimers are in GDP-bound state, owing to GTPase activity of alpha-tubulin. The polypeptide is Tubulin alpha-4 chain (Gossypium hirsutum (Upland cotton)).